A 272-amino-acid polypeptide reads, in one-letter code: L-aspartate dehydrogenase (272 aa).

NAD(+) contacts are provided by Ala125 and Asn192. His222 is an active-site residue.

It belongs to the L-aspartate dehydrogenase family.

The enzyme catalyses L-aspartate + NADP(+) + H2O = oxaloacetate + NH4(+) + NADPH + H(+). It catalyses the reaction L-aspartate + NAD(+) + H2O = oxaloacetate + NH4(+) + NADH + H(+). The protein operates within cofactor biosynthesis; NAD(+) biosynthesis; iminoaspartate from L-aspartate (dehydrogenase route): step 1/1. In terms of biological role, specifically catalyzes the NAD or NADP-dependent dehydrogenation of L-aspartate to iminoaspartate. The chain is L-aspartate dehydrogenase from Nitrosopumilus maritimus (strain SCM1).